A 387-amino-acid polypeptide reads, in one-letter code: uncharacterized protein (387 aa).

It belongs to the geranylgeranyl reductase family. ChlP subfamily.

This is an uncharacterized protein from Methanocaldococcus jannaschii (strain ATCC 43067 / DSM 2661 / JAL-1 / JCM 10045 / NBRC 100440) (Methanococcus jannaschii).